The sequence spans 487 residues: UDP-N-acetylmuramate--L-alanine ligase (487 aa).

ATP is bound at residue 122–128 (GTHGKTS).

It belongs to the MurCDEF family.

The protein localises to the cytoplasm. The catalysed reaction is UDP-N-acetyl-alpha-D-muramate + L-alanine + ATP = UDP-N-acetyl-alpha-D-muramoyl-L-alanine + ADP + phosphate + H(+). It functions in the pathway cell wall biogenesis; peptidoglycan biosynthesis. Its function is as follows. Cell wall formation. In Corynebacterium urealyticum (strain ATCC 43042 / DSM 7109), this protein is UDP-N-acetylmuramate--L-alanine ligase.